Consider the following 451-residue polypeptide: Probable plasmid replicative DNA helicase (451 aa).

An SF4 helicase domain is found at 194-451; it reads NDSFYDGLPT…SKFSAIKKVW (258 aa). An ATP-binding site is contributed by 225–232; the sequence is ARPSIGKT.

Belongs to the helicase family. DnaB subfamily. Homohexamer.

It catalyses the reaction Couples ATP hydrolysis with the unwinding of duplex DNA at the replication fork by translocating in the 5'-3' direction. This creates two antiparallel DNA single strands (ssDNA). The leading ssDNA polymer is the template for DNA polymerase III holoenzyme which synthesizes a continuous strand.. It carries out the reaction ATP + H2O = ADP + phosphate + H(+). Functionally, a replicative DNA helicase, it participates in initiation and elongation during DNA replication. Travels ahead of the DNA replisome, separating dsDNA into templates for DNA synthesis. A processive ATP-dependent 5'-3' DNA helicase it has DNA-dependent ATPase activity. This Chlamydia muridarum (strain MoPn / Nigg) protein is Probable plasmid replicative DNA helicase.